Here is a 321-residue protein sequence, read N- to C-terminus: Ribosomal RNA small subunit methyltransferase H (321 aa).

Residues 43-45 (GGH), aspartate 63, phenylalanine 89, aspartate 110, and glutamine 117 contribute to the S-adenosyl-L-methionine site. The tract at residues 286 to 321 (HPAGKALRAGPRETRDNPRSRSAVLRVAERSERHAA) is disordered. Basic and acidic residues-rich tracts occupy residues 295 to 304 (GPRETRDNPR) and 312 to 321 (VAERSERHAA).

The protein belongs to the methyltransferase superfamily. RsmH family.

The protein localises to the cytoplasm. The catalysed reaction is cytidine(1402) in 16S rRNA + S-adenosyl-L-methionine = N(4)-methylcytidine(1402) in 16S rRNA + S-adenosyl-L-homocysteine + H(+). Its function is as follows. Specifically methylates the N4 position of cytidine in position 1402 (C1402) of 16S rRNA. In Acidithiobacillus ferrooxidans (strain ATCC 23270 / DSM 14882 / CIP 104768 / NCIMB 8455) (Ferrobacillus ferrooxidans (strain ATCC 23270)), this protein is Ribosomal RNA small subunit methyltransferase H.